The chain runs to 157 residues: DNA-binding protein MNB1B (157 aa).

Disordered regions lie at residues 1 to 45 (MKGA…KRAP), 59 to 87 (FKEK…SESD), and 109 to 157 (YNKG…DDDE). 2 stretches are compositionally biased toward basic and acidic residues: residues 10 to 27 (AKAD…EKPA) and 76 to 87 (AGDRWKSLSESD). The HMG box DNA-binding region spans 41–110 (PKRAPSAFFV…EYNKAIAAYN (70 aa)). Acidic residues-rich tracts occupy residues 124–133 (EEEEEDEEES) and 141–157 (NDED…DDDE). Position 149 is a phosphoserine; by CK2 (Ser149).

Expressed in all tissues examined.

The protein resides in the nucleus. Its function is as follows. Recognizes an AAGG motif at the MNF1-binding site. The sequence is that of DNA-binding protein MNB1B (MNB1B) from Zea mays (Maize).